The following is a 405-amino-acid chain: S-adenosylmethionine sensor upstream of mTORC1 (405 aa).

The interval 1-34 (MEPGAGGRNTARAQRAGSPNTPPPREQERKLEQE) is disordered. Over residues 25-34 (REQERKLEQE) the composition is skewed to basic and acidic residues. S-adenosyl-L-methionine is bound by residues Arg95, Gly172, Asp190, Asp202, Phe203, and Ser244.

The protein belongs to the BMT2/SAMTOR family. Interacts with the DEPDC5 subunit of the GATOR1 complex; interaction is disrupted when SAMTOR binds S-adenosyl-L-methionine. Interacts with the KICSTOR complex; interaction is disrupted when SAMTOR binds S-adenosyl-L-methionine.

In terms of biological role, S-adenosyl-L-methionine-binding protein that acts as an inhibitor of mTORC1 signaling via interaction with the GATOR1 and KICSTOR complexes. Acts as a sensor of S-adenosyl-L-methionine to signal methionine sufficiency to mTORC1: in presence of methionine, binds S-adenosyl-L-methionine, leading to disrupt interaction with the GATOR1 and KICSTOR complexes and promote mTORC1 signaling. Upon methionine starvation, S-adenosyl-L-methionine levels are reduced, thereby promoting the association with GATOR1 and KICSTOR, leading to inhibit mTORC1 signaling. Probably also acts as a S-adenosyl-L-methionine-dependent methyltransferase (Potential). The chain is S-adenosylmethionine sensor upstream of mTORC1 from Homo sapiens (Human).